The primary structure comprises 4910 residues: MSQDRILLDLDVVNQRLILFNSAFPSDAIEAPFHFSNKESTSENLDNLAGTILHSRSITGHVFLYKHIFLEIVARWIKDSKKKDYVLVIEKLASIITIFPVAMPLIEDYLDKENDHFITILQNPSTQKDSDMFKILLAYYRLLYHNKEVFARFIQPDILYQLVDLLTKEQENQVVIFLALKVLSLYLDMGEKTLNDMLDTYIKSRDSLLGHFEGDSGIDYSFLELNEAKRCANFSKLPSVPECFTIEKKSSYFIIEPQDLSTKVASICGVIVPKVHTIHDKVFYPLTFVPTHKTVSSLRQLGRKIQNSTPIMLIGKAGSGKTFLINELSKYMGCHDSIVKIHLGEQTDAKLLIGTYTSGDKPGTFEWRAGVLATAVKEGRWVLIEDIDKAPTDVLSILLSLLEKRELTIPSRGETVKAANGFQLISTVRINEDHQKDSSNKIYNLNMIGMRIWNVIELEEPSEEDLTHILAQKFPILTNLIPKLIDSYKNVKSIYMNTKFISLNKGAHTRVVSVRDLIKLCERLDILFKNNGINKPDQLIQSSVYDSIFSEAADCFAGAIGEFKALEPIIQAIGESLDIASSRISLFLTQHVPTLENLDDSIKIGRAVLLKEKLNIQKKSMNSTLFAFTNHSLRLMEQISVCIQMTEPVLLVGETGTGKTTVVQQLAKMLAKKLTVINVSQQTETGDLLGGYKPVNSKTVAVPIQENFETLFNATFSLKKNEKFHKMLHRCFNKNQWKNVVKLWNEAYKMAQSILKITNTENENENAKKKKRRLNTHEKKLLLDKWADFNDSVKKFEAQSSSIENSFVFNFVEGSLVKTIRAGEWLLLDEVNLATADTLESISDLLTEPDSRSILLSEKGDAEPIKAHPDFRIFACMNPATDVGKRDLPMGIRSRFTEIYVHSPERDITDLLSIIDKYIGKYSVSDEWVGNDIAELYLEAKKLSDNNTIVDGSNQKPHFSIRTLTRTLLYVTDIIHIYGLRRSLYDGFCMSFLTLLDQKSEAILKPVIEKFTLGRLKNVKSIMSQTPPSPGPDYVQFKHYWMKKGPNTIQEQAHYIITPFVEKNMMNLVRATSGKRFPVLIQGPTSSGKTSMIKYLADITGHKFVRINNHEHTDLQEYLGTYVTDDTGKLSFKEGVLVEALRKGYWIVLDELNLAPTDVLEALNRLLDDNRELFIPETQEVVHPHPDFLLFATQNPPGIYGGRKILSRAFRNRFLELHFDDIPQDELEIILRERCQIAPSYAKKIVEVYRQLSIERSASRLFEQKNSFATLRDLFRWALRDAVGYEQLAASGYMLLAERCRTPQEKVTVKKTLEKVMKVKLDMDQYYASLEDKSLEAIGSVTWTKGMRRLSVLVSSCLKNKEPVLLVGETGCGKTTICQLLAQFMGRELITLNAHQNTETGDILGAQRPVRNRSEIQYKLIKSLKTALNIANDQDVDLKELLQLYSKSDNKNIAEDVQLEIQKLRDSLNVLFEWSDGPLIQAMRTGNFFLLDEISLADDSVLERLNSVLEPERSLLLAEQGSSDSLVTASENFQFFATMNPGGDYGKKELSPALRNRFTEIWVPSMEDFNDVNMIVSSRLLEDLKDLANPIVKFSEWFGKKLGGGNATSGVISLRDILAWVEFINKVFPKIQNKSTALIQGASMVFIDALGTNNTAYLAENENDLKSLRTECIIQLLKLCGDDLELQQIETNEIIVTQDELQVGMFKIPRFPDAQSSSFNLTAPTTASNLVRVVRAMQVHKPILLEGSPGVGKTSLITALANITGNKLTRINLSEQTDLVDLFGADAPGERSGEFLWHDAPFLRAMKKGEWVLLDEMNLASQSVLEGLNACLDHRGEAYIPELDISFSCHPNFLVFAAQNPQYQGGGRKGLPKSFVNRFSVVFIDMLTSDDLLLIAKHLYPSIEPDIIAKMIKLMSTLEDQVCKRKLWGNSGSPWEFNLRDTLRWLKLLNQYSICEDVDVFDFVDIIVKQRFRTISDKNKAQLLIEDIFGKFSTKENFFKLTEDYVQINNEVALRNPHYRYPITQNLFPLECNVAVYESVLKAINNNWPLVLVGPSNSGKTETIRFLASILGPRVDVFSMNSDIDSMDILGGYEQVDLTRQISYITEELTNIVREIISMNMKLSPNATAIMEGLNLLKYLLNNIVTPEKFQDFRNRFNRFFSHLEGHPLLKTMSMNIEKMTEIITKEASVKFEWFDGMLVKAVEKGHWLILDNANLCSPSVLDRLNSLLEIDGSLLINECSQEDGQPRVLKPHPNFRLFLTMDPKYGELSRAMRNRGVEIYIDELHSRSTAFDRLTLGFELGENIDFVSIDDGIKKIKLNEPDMSIPLKHYVPSYLSRPCIFAQVHDILLLSDEEPIEESLAAVIPISHLGEVGKWANNVLNCTEYSEKKIAERLYVFITFLTDMGVLEKINNLYKPANLKFQKALGLHDKQLTEETVSLTLNEYVLPTVSKYSDKIKSPESLYLLSSLRLLLNSLNALKLINEKSTHGKIDELTYIELSAAAFNGRHLKNIPRIPIFCILYNILTVMSENLKTESLFCGSNQYQYYWDLLVIVIAALETAVTKDEARLRVYKELIDSWIASVKSKSDIEITPFLNINLEFTDVLQLSRGHSITLLWDIFRKNYPTTSNSWLAFEKLINLSEKFDKVRLLQFSESYNSIKDLMDVFRLLNDDVLNNKLSEFNLLLSKLEDGINELELISNKFLNKRKHYFADEFDNLIRYTFSVDTAELIKELAPASSLATQKLTKLITNKYNYPPIFDVLWTEKNAKLTSFTSTIFSSQFLEDVVRKSNNLKSFSGNQIKQSISDAELLLSSTIKCSPNLLKSQMEYYKNMLLSWLRKVIDIHVGGDCLKLTLKELCSLIEEKTASETRVTFAEYIFPALDLAESSKSLEELGEAWITFGTGLLLLFVPDSPYDPAIHDYVLYDLFLKTKTFSQNLMKSWRNVRKVISGDEEIFTEKLINTISDDDAPQSPRVYRTGMSIDSLFDEWMAFLSSTMSSRQIKELVSSYKCNSDQSDRRLEMLQQNSAHFLNRLESGYSKFADLNDILAGYIYSINFGFDLLKLQKSKDRASFQISPLWSMDPINISCAENVLSAYHELSRFFKKGDMEDTSIEKVLMYFLTLFKFHKRDTNLLEIFEAALYTLYSRWSVRRFRQEQEENEKSNMFKFNDNSDDYEADFRKLFPDYEDTALVTNEKDISSPENLDDIYFKLADTYISVFDKDHDANFSSELKSGAIITTILSEDLKNTRIEELKSGSLSAVINTLDAETQSFKNTEVFGNIDFYHDFSIPEFQKAGDIIETVLKSVLKLLKQWPEHATLKELYRVSQEFLNYPIKTPLARQLQKIEQIYTYLAEWEKYASSEVSLNNTVKLITDLIVSWRKLELRTWKGLFNSEDAKTRKSIGKWWFYLYESIVISNFVSEKKETAPNATLLVSSLNLFFSKSTLGEFNARLDLVKAFYKHIQLIGLRSSKIAGLLHNTIKFYYQFKPLIDERITNGKKSLEKEIDDIILLASWKDVNVDALKQSSRKSHNNLYKIVRKYRDLLNGDAKTIIEAGLLYSNENKLKLPTLKQHFYEDPNLEASKNLVKEISTWSMRAAPLRNIDTVASNMDSYLEKISSQEFPNFADLASDFYAEAERLRKETPNVYTKENKKRLAYLKTQKSKLLGDALKELRRIGLKVNFREDIQKVQSSTTTILANIAPFNNEYLNSSDAFFFKILDLLPKLRSAASNPSDDIPVAAIERGMALAQSLMFSLITVRHPLSEFTNDYCKINGMMLDLEHFTCLKGDIVHSSLKANVDNVRLFEKWLPSLLDYAAQTLSVISKYSATSEQQKILLDAKSTLSSFFVHFNSSRIFDSSFIESYSRFELFINELLKKLENAKETGNAFVFDIIIEWIKANKGGPIKKEQKRGPSVEDVEQAFRRTFTSIILSFQKVIGDGIESISETDDNWLSASFKKVMVNVKLLRSSVVSKNIETALSLLKDFDFTTTESIYVKSVISFTLPVITRYYNAMTVVLERSRIYYTNTSRGMYILSTILHSLAKNGFCSPQPPSEEVDDKNLQEGTGLGDGEGAQNNNKDVEQDEDLTEDAQNENKEQQDKDERDDENEDDAVEMEGDMAGELEDLSNGEENDDEDTDSEEEELDEEIDDLNEDDPNAIDDKMWDDKASDNSKEKDTDQNLDGKNQEEDVQAAENDEQQRDNKEGGDEDPNAPEDGDEEIENDENAEEENDVGEQEDEVKDEEGEDLEANVPEIETLDLPEDMNLDSEHEESDEDVDMSDGMPDDLNKEEVGNEDEEVKQESGIESDNENDEPGPEEDAGETETALDEEEGAEEDVDMTNDEGKEDEENGPEEQAMSDEEELKQDAAMEENKEKGGEQNTEGLDGVEEKADTEDIDQEAAVQQDSGSKGAGADATDTQEQDDVGGSGTTQNTYEEDQEDVTKNNEESREEATAALKQLGDSMKEYHRRRQDIKEAQTNGEEDENLEKNNERPDEFEHVEGANTETDTQALGSATQDQLQTIDEDMAIDDDREEQEVDQKELVEDADDEKMDIDEEEMLSDIDAHDANNDVDSKKSGFIGKRKSEEDFENELSNEHFSADQEDDSEIQSLIENIEDNPPDASASLTPERSLEESRELWHKSEISTADLVSRLGEQLRLILEPTLATKLKGDYKTGKRLNMKRIIPYIASQFRKDKIWLRRTKPSKRQYQIMIALDDSKSMSESKCVKLAFDSLCLVSKTLTQLEAGGLSIVKFGENIKEVHSFDQQFSNESGARAFQWFGFQETKTDVKKLVAESTKIFERARAMVHNDQWQLEIVISDGICEDHETIQKLVRRARENKIMLVFVIIDGITSNESILDMSQVNYIPDQYGNPQLKITKYLDTFPFEFYVVVHDISELPEMLSLILRQYFTDLASS.

2 AAA-ATPase protomer regions span residues Ile305 to Phe528 and Met636 to Ile975. Residues Gly315–Thr322 and Gly653–Thr660 contribute to the ATP site. An interaction with RIX1 region spans residues Val695–Ile803. Thr1026 is subject to Phosphothreonine. AAA-ATPase protomer stretches follow at residues His1054–Arg1280, Lys1345–Ile1624, Arg1732–Ile1985, and Val2036–His2286. ATP contacts are provided by residues Gly1083–Thr1090, Gly1368–Thr1375, Gly1747–Thr1754, and Gly2054–Thr2061. Residues Glu2372–Lys4075 are linker. Ser2971 is modified (phosphoserine). Disordered regions lie at residues Ser4045 to Asp4547, Ser4555 to Ile4574, and Ser4579 to Ser4600. Over residues Glu4078–Gln4088 the composition is skewed to acidic residues. A compositionally biased stretch (basic and acidic residues) spans Asn4089–Asp4098. A compositionally biased stretch (acidic residues) spans Glu4099 to Ala4154. Basic and acidic residues predominate over residues Ile4155 to Asp4174. Composition is skewed to acidic residues over residues Gly4202–Glu4244, Glu4251–Met4274, and Gly4288–Leu4358. Ser4353 is modified (phosphoserine). The span at Lys4359 to Gly4372 shows a compositional bias: basic and acidic residues. Residue Thr4388 is modified to Phosphothreonine. 2 stretches are compositionally biased toward basic and acidic residues: residues Asp4435–Ala4447 and Leu4481–Glu4495. The span at Asn4498–Thr4516 shows a compositional bias: polar residues. Residues Ile4517–Glu4531 are compositionally biased toward acidic residues. Residue Ser4555 is modified to Phosphoserine. Positions Ile4557–Lys4570 are enriched in basic and acidic residues. The VWFA domain maps to Gln4704–Ile4899.

It belongs to the midasin family. Associates with pre-60S ribosomes in the nucleoplasm. Interacts (via its hexameric AAA ATPase ring) with the RIX1 complex (via RIX1); this interaction is crucial for recruitment of MDN1 to the pre-ribosomal particle. Interacts (via VWFA/MIDAS domain) with YTM1 (via UBL domain). Interacts (via VWFA/MIDAS domain) with RSA4 (via UBL domain).

The protein resides in the nucleus. It is found in the nucleolus. It localises to the nucleoplasm. In terms of biological role, nuclear chaperone required for maturation and nuclear export of pre-60S ribosome subunits. Functions at successive maturation steps to remove ribosomal factors at critical transition points, first driving the exit of early pre-60S particles from the nucleolus and then driving late pre-60S particles from the nucleus. At an early stage in 60S maturation, mediates the dissociation of the NOP7 complex (YTM1-ERB1-NOP7) from early pre-60S particles, rendering them competent for export from the nucleolus to the nucleoplasm. Subsequently recruited to the nucleoplasmic particles through interaction with the RIX1 complex. This binding is only possible if the 5S RNP at the central protuberance has undergone the rotation to complete its maturation. After remodeling, removes the ribosome biogenesis factor RSA4 in an ATP hydrolysis-driven step from pre-60S ribosomal subunits, rendering them competent for export from the nucleoplasm to the cytoplasm. Activates the GTPase activity of NOG2, which disengages from the pre-60S particle upon GTP hydrolysis, thus freeing its binding site for the nuclear export factor NMD3. This chain is Midasin (MDN1), found in Saccharomyces cerevisiae (strain ATCC 204508 / S288c) (Baker's yeast).